We begin with the raw amino-acid sequence, 257 residues long: Zinc transporter ZupT (257 aa).

8 consecutive transmembrane segments (helical) span residues 5–25, 32–52, 61–81, 109–129, 137–157, 171–191, 195–215, and 236–256; these read LILT…GVLG, LLAF…LMEM, GMSP…YLGL, AILL…ATFV, LGFG…LAVV, ILWA…AWLI, MISP…MVAL, and GVLC…TAGI. The Fe(2+) site is built by asparagine 120 and glutamate 123. 2 residues coordinate Zn(2+): glutamate 123 and histidine 148. Fe(2+) contacts are provided by asparagine 149, glutamate 152, and glutamate 181. Zn(2+) is bound at residue glutamate 152.

The protein belongs to the ZIP transporter (TC 2.A.5) family. ZupT subfamily.

The protein localises to the cell inner membrane. It carries out the reaction Zn(2+)(in) = Zn(2+)(out). In terms of biological role, mediates zinc uptake. May also transport other divalent cations. This chain is Zinc transporter ZupT, found in Shigella dysenteriae serotype 1 (strain Sd197).